A 42-amino-acid chain; its full sequence is Protein Tat (42 aa).

The segment at 1–24 (MEPVDPNLEPWNHPGSQPKTACNQ) is interaction with human CREBBP. The segment at 22–37 (CNQCYCKKCSYHCLVC) is cysteine-rich. K28 is subject to N6-acetyllysine; by host PCAF.

The protein belongs to the lentiviruses Tat family. In terms of assembly, interacts with host CCNT1. Associates with the P-TEFb complex composed at least of Tat, P-TEFb (CDK9 and CCNT1), TAR RNA, RNA Pol II. Recruits the HATs CREBBP, TAF1/TFIID, EP300, PCAF and GCN5L2. Interacts with host KAT5/Tip60; this interaction targets the latter to degradation. Interacts with the host deacetylase SIRT1. Interacts with host capping enzyme RNGTT; this interaction stimulates RNGTT. Binds to host KDR, and to the host integrins ITGAV/ITGB3 and ITGA5/ITGB1. Interacts with host KPNB1/importin beta-1 without previous binding to KPNA1/importin alpha-1. Interacts with EIF2AK2. Interacts with host nucleosome assembly protein NAP1L1; this interaction may be required for the transport of Tat within the nucleus, since the two proteins interact at the nuclear rim. Interacts with host C1QBP/SF2P32; this interaction involves lysine-acetylated Tat. Interacts with the host chemokine receptors CCR2, CCR3 and CXCR4. Interacts with host DPP4/CD26; this interaction may trigger an anti-proliferative effect. Interacts with host LDLR. Interacts with the host extracellular matrix metalloproteinase MMP1. Interacts with host PRMT6; this interaction mediates Tat's methylation. Interacts with, and is ubiquitinated by MDM2/Hdm2. Interacts with host PSMC3 and HTATIP2. Interacts with STAB1; this interaction may overcome SATB1-mediated repression of IL2 and IL2RA (interleukin) in T cells by binding to the same domain than HDAC1. Interacts (when acetylated) with human CDK13, thereby increasing HIV-1 mRNA splicing and promoting the production of the doubly spliced HIV-1 protein Nef. Interacts with host TBP; this interaction modulates the activity of transcriptional pre-initiation complex. Interacts with host RELA. Interacts with host PLSCR1; this interaction negatively regulates Tat transactivation activity by altering its subcellular distribution. Phosphorylated by EIF2AK2 on serine and threonine residues adjacent to the basic region important for TAR RNA binding and function. Phosphorylation of Tat by EIF2AK2 is dependent on the prior activation of EIF2AK2 by dsRNA. In terms of processing, asymmetrical arginine methylation by host PRMT6 seems to diminish the transactivation capacity of Tat and affects the interaction with host CCNT1. Post-translationally, polyubiquitination by host MDM2 does not target Tat to degradation, but activates its transactivation function and fosters interaction with CCNT1 and TAR RNA.

Its subcellular location is the host nucleus. It localises to the host nucleolus. The protein resides in the host cytoplasm. The protein localises to the secreted. In terms of biological role, transcriptional activator that increases RNA Pol II processivity, thereby increasing the level of full-length viral transcripts. Recognizes a hairpin structure at the 5'-LTR of the nascent viral mRNAs referred to as the transactivation responsive RNA element (TAR) and recruits the cyclin T1-CDK9 complex (P-TEFb complex) that will in turn hyperphosphorylate the RNA polymerase II to allow efficient elongation. The CDK9 component of P-TEFb and other Tat-activated kinases hyperphosphorylate the C-terminus of RNA Pol II that becomes stabilized and much more processive. Other factors such as HTATSF1/Tat-SF1, SUPT5H/SPT5, and HTATIP2 are also important for Tat's function. Besides its effect on RNA Pol II processivity, Tat induces chromatin remodeling of proviral genes by recruiting the histone acetyltransferases (HATs) CREBBP, EP300 and PCAF to the chromatin. This also contributes to the increase in proviral transcription rate, especially when the provirus integrates in transcriptionally silent region of the host genome. To ensure maximal activation of the LTR, Tat mediates nuclear translocation of NF-kappa-B by interacting with host RELA. Through its interaction with host TBP, Tat may also modulate transcription initiation. Tat can reactivate a latently infected cell by penetrating in it and transactivating its LTR promoter. In the cytoplasm, Tat is thought to act as a translational activator of HIV-1 mRNAs. Extracellular circulating Tat can be endocytosed by surrounding uninfected cells via the binding to several surface receptors such as CD26, CXCR4, heparan sulfate proteoglycans (HSPG) or LDLR. Neurons are rarely infected, but they internalize Tat via their LDLR. Through its interaction with nuclear HATs, Tat is potentially able to control the acetylation-dependent cellular gene expression. Modulates the expression of many cellular genes involved in cell survival, proliferation or in coding for cytokines or cytokine receptors. Tat plays a role in T-cell and neurons apoptosis. Tat induced neurotoxicity and apoptosis probably contribute to neuroAIDS. Circulating Tat also acts as a chemokine-like and/or growth factor-like molecule that binds to specific receptors on the surface of the cells, affecting many cellular pathways. In the vascular system, Tat binds to ITGAV/ITGB3 and ITGA5/ITGB1 integrins dimers at the surface of endothelial cells and competes with bFGF for heparin-binding sites, leading to an excess of soluble bFGF. The polypeptide is Protein Tat (Human immunodeficiency virus type 1 group M subtype C (isolate ETH2220) (HIV-1)).